The sequence spans 352 residues: MKKIVFTGGGTVGHVTLNLLLMPKFIEDGWEVHYIGDKCGIEHQEILKSGLDVTFHSIATGKLRRYFSWQNMLDVFKVGWGIVQSLFIMLRLRPQTLFSKGGFVSVPPVIAARVSGVPVFIHESDLSMGLANKIAYKFATKMYSTFEQASSLAKVEHVGAVTKVSDKNTPEPDELVDIQTHFNPKLPTVLFVGGSAGARVFNQLVTDHKKELTERYNIINLTGDSSLNELRQNLFRVDYVTDLYQPLMELADIVVTRGGANTIFELLAIAKLHVIVPLGREASRGDQIENAAYFVKKGYAEDLQESDLTLDSLEEKLSHLLSHKEDYQAKMKASKELKSLADFYQLLKKDLS.

S195 and Q287 together coordinate UDP-N-acetyl-alpha-D-glucosamine.

It belongs to the glycosyltransferase 28 family. MurG subfamily.

The protein localises to the cell membrane. The enzyme catalyses Mur2Ac(oyl-L-Ala-gamma-D-Glu-L-Lys-D-Ala-D-Ala)-di-trans,octa-cis-undecaprenyl diphosphate + UDP-N-acetyl-alpha-D-glucosamine = beta-D-GlcNAc-(1-&gt;4)-Mur2Ac(oyl-L-Ala-gamma-D-Glu-L-Lys-D-Ala-D-Ala)-di-trans,octa-cis-undecaprenyl diphosphate + UDP + H(+). It participates in cell wall biogenesis; peptidoglycan biosynthesis. Its function is as follows. Cell wall formation. Catalyzes the transfer of a GlcNAc subunit on undecaprenyl-pyrophosphoryl-MurNAc-pentapeptide (lipid intermediate I) to form undecaprenyl-pyrophosphoryl-MurNAc-(pentapeptide)GlcNAc (lipid intermediate II). The sequence is that of UDP-N-acetylglucosamine--N-acetylmuramyl-(pentapeptide) pyrophosphoryl-undecaprenol N-acetylglucosamine transferase from Streptococcus pneumoniae serotype 4 (strain ATCC BAA-334 / TIGR4).